The primary structure comprises 362 residues: 3-dehydroquinate synthase (362 aa).

NAD(+) is bound by residues S72–K77, G106–D110, T130–T131, K142, and K151. Zn(2+) contacts are provided by E184, H246, and H263.

It belongs to the sugar phosphate cyclases superfamily. Dehydroquinate synthase family. The cofactor is Co(2+). Zn(2+) serves as cofactor. NAD(+) is required as a cofactor.

Its subcellular location is the cytoplasm. The catalysed reaction is 7-phospho-2-dehydro-3-deoxy-D-arabino-heptonate = 3-dehydroquinate + phosphate. It participates in metabolic intermediate biosynthesis; chorismate biosynthesis; chorismate from D-erythrose 4-phosphate and phosphoenolpyruvate: step 2/7. Its function is as follows. Catalyzes the conversion of 3-deoxy-D-arabino-heptulosonate 7-phosphate (DAHP) to dehydroquinate (DHQ). The protein is 3-dehydroquinate synthase of Bacillus velezensis (strain DSM 23117 / BGSC 10A6 / LMG 26770 / FZB42) (Bacillus amyloliquefaciens subsp. plantarum).